The chain runs to 1345 residues: Aldehyde oxidase 2 (1345 aa).

In terms of domain architecture, 2Fe-2S ferredoxin-type spans 9–96 (DDLEFFVNGR…GAAVTTVEGV (88 aa)). [2Fe-2S] cluster is bound by residues C48, C53, C56, and C78. Q117 provides a ligand contact to Mo-molybdopterin. Residues C118, C121, C153, and C155 each coordinate [2Fe-2S] cluster. C155 lines the Mo-molybdopterin pocket. The FAD-binding PCMH-type domain maps to 238 to 423 (FYGERITWIA…GSVYIPHSQK (186 aa)). FAD is bound by residues 266 to 273 (LISGNTAL), A347, S356, H360, D369, and L413. Mo-molybdopterin-binding positions include 812–813 (GF), 1094–1097 (ASVG), Q1209, and L1274. The active-site Proton acceptor; for azaheterocycle hydroxylase activity is the E1276.

The protein belongs to the xanthine dehydrogenase family. In terms of assembly, homodimer. Requires [2Fe-2S] cluster as cofactor. FAD serves as cofactor. The cofactor is Mo-molybdopterin. As to expression, expressed in olfactory mucosa epithelium (at protein level). Detected in skin.

It localises to the cytoplasm. It catalyses the reaction an aldehyde + O2 + H2O = a carboxylate + H2O2 + H(+). Functionally, oxidase with broad substrate specificity, oxidizing aromatic azaheterocycles, such as phthalazine, as well as aldehydes, such as benzaldehyde and retinal. Cannot use hypoxanthine as substrate. The chain is Aldehyde oxidase 2 (Aox2) from Mus musculus (Mouse).